The sequence spans 152 residues: Small ribosomal subunit protein uS8m (152 aa).

Belongs to the universal ribosomal protein uS8 family.

Its subcellular location is the mitochondrion. The protein is Small ribosomal subunit protein uS8m (RPS8) of Marchantia polymorpha (Common liverwort).